A 124-amino-acid polypeptide reads, in one-letter code: Large ribosomal subunit protein bL12 (124 aa).

The protein belongs to the bacterial ribosomal protein bL12 family. In terms of assembly, homodimer. Part of the ribosomal stalk of the 50S ribosomal subunit. Forms a multimeric L10(L12)X complex, where L10 forms an elongated spine to which 2 to 4 L12 dimers bind in a sequential fashion. Binds GTP-bound translation factors.

In terms of biological role, forms part of the ribosomal stalk which helps the ribosome interact with GTP-bound translation factors. Is thus essential for accurate translation. The protein is Large ribosomal subunit protein bL12 of Borreliella burgdorferi (strain ATCC 35210 / DSM 4680 / CIP 102532 / B31) (Borrelia burgdorferi).